Reading from the N-terminus, the 396-residue chain is Pyridinium-3,5-bisthiocarboxylic acid mononucleotide nickel insertion protein (396 aa).

The protein belongs to the LarC family.

It catalyses the reaction Ni(II)-pyridinium-3,5-bisthiocarboxylate mononucleotide = pyridinium-3,5-bisthiocarboxylate mononucleotide + Ni(2+). Functionally, involved in the biosynthesis of a nickel-pincer cofactor ((SCS)Ni(II) pincer complex). Binds Ni(2+), and functions in nickel delivery to pyridinium-3,5-bisthiocarboxylic acid mononucleotide (P2TMN), to form the mature cofactor. Is thus probably required for the activation of nickel-pincer cofactor-dependent enzymes. In Moorella thermoacetica (strain ATCC 39073 / JCM 9320), this protein is Pyridinium-3,5-bisthiocarboxylic acid mononucleotide nickel insertion protein.